The primary structure comprises 333 residues: Taste receptor type 2 member 38 (333 aa).

Over 1–17 (MLTLTHICTVSYEVRST) the chain is Extracellular. The helical transmembrane segment at 18-38 (FLFISVLEFAVGFLTNAFISL) threads the bilayer. Residues 39 to 55 (VNFWDVVKRQPLSNSDC) lie on the Cytoplasmic side of the membrane. Residues 56-76 (VLLCLSISRLFLHGLLFLSAI) traverse the membrane as a helical segment. At 77–94 (QLTHFQKLSEPLNHSYQV) the chain is on the extracellular side. The helical transmembrane segment at 95 to 115 (ILMLWMIANQANLWLAACLSL) threads the bilayer. Over 116–142 (LYCSKLIRFSHTFLICLASWVSRKISQ) the chain is Cytoplasmic. A helical transmembrane segment spans residues 143–163 (MLLGIILCSCICTVLCVWCFF). Over 164 to 190 (GRLHFTVTTVLFMNNNTRLNWQIKDLN) the chain is Extracellular. N-linked (GlcNAc...) asparagine glycosylation occurs at Asn178. Residues 191-211 (LFYSFLFCYLWSVPPFLLFLV) form a helical membrane-spanning segment. Residues 212–251 (SSGMLTVSLGRHMRTMKVYTRDSRDPSLEAHIKALKSLVS) lie on the Cytoplasmic side of the membrane. Residues 252-272 (FFCFFVISSCAAFISVPLLIL) form a helical membrane-spanning segment. Residues 273–276 (WHDK) lie on the Extracellular side of the membrane. A helical membrane pass occupies residues 277–297 (IGVMVCVGIMAACPSGHAAVL). At 298–333 (ISGNAKLRRAVTTILLWAQSSLKVRADHMADSRTLC) the chain is on the cytoplasmic side.

Belongs to the G-protein coupled receptor T2R family.

The protein localises to the membrane. Functionally, receptor that may play a role in the perception of bitterness and is gustducin-linked. May play a role in sensing the chemical composition of the gastrointestinal content. The activity of this receptor may stimulate alpha gustducin, mediate PLC-beta-2 activation and lead to the gating of TRPM5. This Papio hamadryas (Hamadryas baboon) protein is Taste receptor type 2 member 38 (TAS2R38).